The chain runs to 209 residues: Auxin-binding protein ABP19a (209 aa).

The N-terminal stretch at 1-18 (MIFPIFFTFFLLLSSSHA) is a signal peptide. Cysteines 24 and 39 form a disulfide. Residues 53-199 (SGLGIAGNTT…TTFLDAAQIK (147 aa)) enclose the Cupin type-1 domain. Asn-60 carries an N-linked (GlcNAc...) asparagine glycan. Residues His-101, His-103, Glu-108, and His-147 each contribute to the Mn(2+) site.

Belongs to the germin family. Interacts with ABP20.

It localises to the secreted. The protein localises to the extracellular space. Its subcellular location is the apoplast. The protein resides in the cell wall. Probable receptor for the plant growth-promoting hormone auxin. This is Auxin-binding protein ABP19a (ABP19A) from Prunus persica (Peach).